Reading from the N-terminus, the 211-residue chain is N-(5'-phosphoribosyl)anthranilate isomerase (211 aa).

It belongs to the TrpF family.

The enzyme catalyses N-(5-phospho-beta-D-ribosyl)anthranilate = 1-(2-carboxyphenylamino)-1-deoxy-D-ribulose 5-phosphate. The protein operates within amino-acid biosynthesis; L-tryptophan biosynthesis; L-tryptophan from chorismate: step 3/5. The chain is N-(5'-phosphoribosyl)anthranilate isomerase from Pseudomonas aeruginosa (strain LESB58).